The primary structure comprises 395 residues: GTPase Obg (395 aa).

Residues 1 to 159 form the Obg domain; that stretch reads MQFVDEASII…RNLRFEMKVM (159 aa). Positions 128 to 147 are disordered; that stretch reads IHFKSSTNRAPRKTTPGTEG. The OBG-type G domain maps to 160 to 333; the sequence is ADVGLLGVPN…LVQAAHRWLT (174 aa). GTP contacts are provided by residues 166-173, 191-195, 213-216, 283-286, and 314-316; these read GVPNAGKS, FTTLV, DVPG, NKLD, and SAI. Positions 173 and 193 each coordinate Mg(2+). Over residues 340 to 368 the composition is skewed to basic and acidic residues; sequence AEDETAFEHEREMRRRMEDEAVARAEARM. The segment at 340-395 is disordered; it reads AEDETAFEHEREMRRRMEDEAVARAEARMSRKRKPAEDDDDDFDEDDYDVEVEYAP. Over residues 376 to 395 the composition is skewed to acidic residues; that stretch reads EDDDDDFDEDDYDVEVEYAP.

Belongs to the TRAFAC class OBG-HflX-like GTPase superfamily. OBG GTPase family. Monomer. The cofactor is Mg(2+).

The protein localises to the cytoplasm. In terms of biological role, an essential GTPase which binds GTP, GDP and possibly (p)ppGpp with moderate affinity, with high nucleotide exchange rates and a fairly low GTP hydrolysis rate. Plays a role in control of the cell cycle, stress response, ribosome biogenesis and in those bacteria that undergo differentiation, in morphogenesis control. The protein is GTPase Obg of Chromohalobacter salexigens (strain ATCC BAA-138 / DSM 3043 / CIP 106854 / NCIMB 13768 / 1H11).